The sequence spans 355 residues: S-adenosylmethionine:tRNA ribosyltransferase-isomerase (355 aa).

This sequence belongs to the QueA family. Monomer.

Its subcellular location is the cytoplasm. The catalysed reaction is 7-aminomethyl-7-carbaguanosine(34) in tRNA + S-adenosyl-L-methionine = epoxyqueuosine(34) in tRNA + adenine + L-methionine + 2 H(+). The protein operates within tRNA modification; tRNA-queuosine biosynthesis. Transfers and isomerizes the ribose moiety from AdoMet to the 7-aminomethyl group of 7-deazaguanine (preQ1-tRNA) to give epoxyqueuosine (oQ-tRNA). The polypeptide is S-adenosylmethionine:tRNA ribosyltransferase-isomerase (Pectobacterium carotovorum subsp. carotovorum (strain PC1)).